The chain runs to 242 residues: Ribonuclease PH (242 aa).

Phosphate-binding positions include Arg-87 and 125-127; that span reads GTR.

The protein belongs to the RNase PH family. In terms of assembly, homohexameric ring arranged as a trimer of dimers.

The enzyme catalyses tRNA(n+1) + phosphate = tRNA(n) + a ribonucleoside 5'-diphosphate. In terms of biological role, phosphorolytic 3'-5' exoribonuclease that plays an important role in tRNA 3'-end maturation. Removes nucleotide residues following the 3'-CCA terminus of tRNAs; can also add nucleotides to the ends of RNA molecules by using nucleoside diphosphates as substrates, but this may not be physiologically important. Probably plays a role in initiation of 16S rRNA degradation (leading to ribosome degradation) during starvation. This Thermosynechococcus vestitus (strain NIES-2133 / IAM M-273 / BP-1) protein is Ribonuclease PH.